We begin with the raw amino-acid sequence, 366 residues long: Chorismate synthase (366 aa).

NADP(+) is bound by residues arginine 48 and arginine 54. Residues 125–127 (RSS), 238–239 (NA), glycine 278, 293–297 (KPTSS), and arginine 319 contribute to the FMN site.

The protein belongs to the chorismate synthase family. In terms of assembly, homotetramer. FMNH2 is required as a cofactor.

The catalysed reaction is 5-O-(1-carboxyvinyl)-3-phosphoshikimate = chorismate + phosphate. It participates in metabolic intermediate biosynthesis; chorismate biosynthesis; chorismate from D-erythrose 4-phosphate and phosphoenolpyruvate: step 7/7. Its function is as follows. Catalyzes the anti-1,4-elimination of the C-3 phosphate and the C-6 proR hydrogen from 5-enolpyruvylshikimate-3-phosphate (EPSP) to yield chorismate, which is the branch point compound that serves as the starting substrate for the three terminal pathways of aromatic amino acid biosynthesis. This reaction introduces a second double bond into the aromatic ring system. The sequence is that of Chorismate synthase from Burkholderia cenocepacia (strain HI2424).